We begin with the raw amino-acid sequence, 448 residues long: Phosphoglucosamine mutase (448 aa).

The Phosphoserine intermediate role is filled by Ser-100. Mg(2+)-binding residues include Ser-100, Asp-240, Asp-242, and Asp-244. Phosphoserine is present on Ser-100.

The protein belongs to the phosphohexose mutase family. Mg(2+) serves as cofactor. Post-translationally, activated by phosphorylation.

The catalysed reaction is alpha-D-glucosamine 1-phosphate = D-glucosamine 6-phosphate. Catalyzes the conversion of glucosamine-6-phosphate to glucosamine-1-phosphate. This chain is Phosphoglucosamine mutase, found in Bacillus pumilus (strain SAFR-032).